Consider the following 197-residue polypeptide: dITP/XTP pyrophosphatase (197 aa).

8-13 (TGNPGK) contributes to the substrate binding site. 2 residues coordinate Mg(2+): E40 and D69. The Proton acceptor role is filled by D69. Substrate is bound by residues S70, 154–157 (FGYD), K177, and 182–183 (HR).

Belongs to the HAM1 NTPase family. As to quaternary structure, homodimer. It depends on Mg(2+) as a cofactor.

It carries out the reaction XTP + H2O = XMP + diphosphate + H(+). It catalyses the reaction dITP + H2O = dIMP + diphosphate + H(+). The catalysed reaction is ITP + H2O = IMP + diphosphate + H(+). Its function is as follows. Pyrophosphatase that catalyzes the hydrolysis of nucleoside triphosphates to their monophosphate derivatives, with a high preference for the non-canonical purine nucleotides XTP (xanthosine triphosphate), dITP (deoxyinosine triphosphate) and ITP. Seems to function as a house-cleaning enzyme that removes non-canonical purine nucleotides from the nucleotide pool, thus preventing their incorporation into DNA/RNA and avoiding chromosomal lesions. The sequence is that of dITP/XTP pyrophosphatase from Yersinia pestis.